A 134-amino-acid chain; its full sequence is MSLSRQDIQRLLEEYQLLNDLLASLQAQHATVSELVEELSTALDGVRLLKSEGGERLVHIGAGIFVGGVFEGREVLTPLGAGYYAFLDLENAERIVKERLEEYSKVKTSLEENIEKLTERALQIRQVLERLGLR.

This sequence belongs to the prefoldin subunit alpha family. Heterohexamer of two alpha and four beta subunits.

The protein resides in the cytoplasm. Functionally, molecular chaperone capable of stabilizing a range of proteins. Seems to fulfill an ATP-independent, HSP70-like function in archaeal de novo protein folding. In Pyrobaculum calidifontis (strain DSM 21063 / JCM 11548 / VA1), this protein is Prefoldin subunit alpha.